Reading from the N-terminus, the 316-residue chain is Pantothenate kinase (316 aa).

95-102 (GSVAVGKS) serves as a coordination point for ATP.

It belongs to the prokaryotic pantothenate kinase family.

It localises to the cytoplasm. The enzyme catalyses (R)-pantothenate + ATP = (R)-4'-phosphopantothenate + ADP + H(+). The protein operates within cofactor biosynthesis; coenzyme A biosynthesis; CoA from (R)-pantothenate: step 1/5. The polypeptide is Pantothenate kinase (Salmonella gallinarum (strain 287/91 / NCTC 13346)).